The primary structure comprises 158 residues: Salt stress-responsive protein YocM (158 aa).

One can recognise a sHSP domain in the interval Gly-51–Asp-158.

This sequence belongs to the small heat shock protein (HSP20) family. As to quaternary structure, forms homodimers, homotetramers and higher oligomers.

Its subcellular location is the cytoplasm. Part of the cellular protein quality control system with a specific role in salt stress response. May facilitate protein homeostasis, together with chemical chaperones that accumulate during the salt stress response. Increased levels of YocM protects against both heat and salt stress. In vitro, displays an unusual aggregase chaperone activity. The protein is Salt stress-responsive protein YocM (yocM) of Bacillus subtilis (strain 168).